We begin with the raw amino-acid sequence, 52 residues long: UPF0181 protein CGSHiGG_01050 (52 aa).

The protein belongs to the UPF0181 family.

The protein is UPF0181 protein CGSHiGG_01050 of Haemophilus influenzae (strain PittGG).